The following is a 412-amino-acid chain: MQKYCIYQHFQFQLLIQHLWIAANCDIADERFDATFHTNVLVNSSGHCQYLPPGIFKSSCYIDVRWFPFDVQHCKLKFGSWSYGGWSLDLQMQEADISGYIPNGEWDLVGIPGKRSERFYECCKEPYPDVTFTVTMRRRTLYYGLNLLIPCVLISALALLVFLLPADSGEKISLGITVLLSLTVFMLLVAEIMPATSDSVPLIAQYFASTMIIVGLSVVVTVIVLQYHHHDPDGGKMPKWTRVILLNWCAWFLRMKRPGEDKVRPACQHKQRRCSLASVEMSAVAPPPASNGNLLYIGFRGLDGVHCVPTPDSGVVCGRMACSPTHDEHLLHGGQPPEGDPDLAKILEEVRYIANRFRCQDESEAVCSEWKFAACVVDRLCLMAFSVFTIICTIGILMSAPNFVEAVSKDFA.

The next 5 helical transmembrane spans lie at 144–164 (GLNLLIPCVLISALALLVFLL), 172–192 (ISLGITVLLSLTVFMLLVAEI), 205–225 (QYFASTMIIVGLSVVVTVIVL), 240–254 (WTRVILLNWCAWFLR), and 380–400 (LCLMAFSVFTIICTIGILMSA).

This sequence belongs to the ligand-gated ion channel (TC 1.A.9) family. As to expression, expressed in hippocampus.

The protein localises to the membrane. In Homo sapiens (Human), this protein is CHRNA7-FAM7A fusion protein (CHRFAM7A).